We begin with the raw amino-acid sequence, 660 residues long: UvrABC system protein B (660 aa).

The Helicase ATP-binding domain maps to 25 to 183 (EGLNKGLKHQ…ALINIHYERN (159 aa)). Residue 38-45 (GVTGSGKT) participates in ATP binding. A Beta-hairpin motif is present at residues 91–114 (YYDYYQPEAYLPTTDTYIEKDSSV). The region spanning 431–593 (QIDDLIGEVN…IVPQTIHKAL (163 aa)) is the Helicase C-terminal domain. In terms of domain architecture, UVR spans 622–657 (ADMVIELEAEMHLAAKNLEFERAAALRDNIKELRST).

This sequence belongs to the UvrB family. As to quaternary structure, forms a heterotetramer with UvrA during the search for lesions. Interacts with UvrC in an incision complex.

It is found in the cytoplasm. Functionally, the UvrABC repair system catalyzes the recognition and processing of DNA lesions. A damage recognition complex composed of 2 UvrA and 2 UvrB subunits scans DNA for abnormalities. Upon binding of the UvrA(2)B(2) complex to a putative damaged site, the DNA wraps around one UvrB monomer. DNA wrap is dependent on ATP binding by UvrB and probably causes local melting of the DNA helix, facilitating insertion of UvrB beta-hairpin between the DNA strands. Then UvrB probes one DNA strand for the presence of a lesion. If a lesion is found the UvrA subunits dissociate and the UvrB-DNA preincision complex is formed. This complex is subsequently bound by UvrC and the second UvrB is released. If no lesion is found, the DNA wraps around the other UvrB subunit that will check the other stand for damage. This chain is UvrABC system protein B, found in Methanococcoides burtonii (strain DSM 6242 / NBRC 107633 / OCM 468 / ACE-M).